A 61-amino-acid chain; its full sequence is Large ribosomal subunit protein uL30 (61 aa).

The protein belongs to the universal ribosomal protein uL30 family. In terms of assembly, part of the 50S ribosomal subunit.

The protein is Large ribosomal subunit protein uL30 of Francisella tularensis subsp. tularensis (strain FSC 198).